Here is a 446-residue protein sequence, read N- to C-terminus: Histidine--tRNA ligase (446 aa).

This sequence belongs to the class-II aminoacyl-tRNA synthetase family. As to quaternary structure, homodimer.

It is found in the cytoplasm. The enzyme catalyses tRNA(His) + L-histidine + ATP = L-histidyl-tRNA(His) + AMP + diphosphate + H(+). This is Histidine--tRNA ligase from Burkholderia ambifaria (strain MC40-6).